Reading from the N-terminus, the 79-residue chain is Peptide Im-5 (79 aa).

A signal peptide spans 1–23 (MKYRKQLLVLFFAYFLVVNESEA). Residues 49-79 (RALMKRDLQDRMDPYQRNLKLDRYLKQLALD) constitute a propeptide that is removed on maturation.

It belongs to the non-disulfide-bridged peptide (NDBP) superfamily. Medium-length antimicrobial peptide (group 3) family. Expressed by the venom gland.

Its subcellular location is the secreted. It is found in the target cell membrane. Its function is as follows. Antimicrobial peptide that may act by disrupting the integrity of the bacterial cell membrane. Has antibacterial activity against Gram-negative bacterium E.coli NBRC 3972 (MIC=10 uM) and against Gram-positive bacteria S.aureus NBRC 13276 (MIC=2.5-5 uM) and B.subtilis NBRC 3009 (MIC=0.5-1 uM). Also shows potent activity against antibiotic-sensitive and -resistant Acinetobacter baumannii (MIC=1.8-3.6 uM). Shows cytolytic activity against human and sheep erythrocytes. Toxic to cricket A.domestica. This chain is Peptide Im-5, found in Isometrus maculatus (Lesser brown scorpion).